Here is a 335-residue protein sequence, read N- to C-terminus: Glycerol-3-phosphate dehydrogenase [NAD(P)+] (335 aa).

Residues serine 10, phenylalanine 11, arginine 31, and lysine 105 each contribute to the NADPH site. 3 residues coordinate sn-glycerol 3-phosphate: lysine 105, glycine 136, and serine 138. Alanine 140 serves as a coordination point for NADPH. Residues lysine 191, aspartate 244, serine 254, arginine 255, and asparagine 256 each coordinate sn-glycerol 3-phosphate. The Proton acceptor role is filled by lysine 191. Arginine 255 is an NADPH binding site. NADPH is bound by residues valine 279 and glutamate 281.

It belongs to the NAD-dependent glycerol-3-phosphate dehydrogenase family.

Its subcellular location is the cytoplasm. It catalyses the reaction sn-glycerol 3-phosphate + NAD(+) = dihydroxyacetone phosphate + NADH + H(+). It carries out the reaction sn-glycerol 3-phosphate + NADP(+) = dihydroxyacetone phosphate + NADPH + H(+). Its pathway is membrane lipid metabolism; glycerophospholipid metabolism. Functionally, catalyzes the reduction of the glycolytic intermediate dihydroxyacetone phosphate (DHAP) to sn-glycerol 3-phosphate (G3P), the key precursor for phospholipid synthesis. The sequence is that of Glycerol-3-phosphate dehydrogenase [NAD(P)+] from Myxococcus xanthus (strain DK1622).